The primary structure comprises 193 residues: Epididymal-specific lipocalin-12 (193 aa).

An N-terminal signal peptide occupies residues 1–19 (MGPWWALWLILTLPQILES). The cysteines at positions 88 and 193 are disulfide-linked. N143 and N172 each carry an N-linked (GlcNAc...) asparagine glycan.

The protein belongs to the calycin superfamily. Lipocalin family. As to quaternary structure, monomer. As to expression, expressed in epididymis.

It is found in the secreted. Binds all-trans retinoic acid and may act as a retinoid carrier protein within the epididymis. May play a role in male fertility. This is Epididymal-specific lipocalin-12 (Lcn12) from Mus musculus (Mouse).